The following is a 315-amino-acid chain: Glycine--tRNA ligase alpha subunit (315 aa).

Belongs to the class-II aminoacyl-tRNA synthetase family. Tetramer of two alpha and two beta subunits.

The protein resides in the cytoplasm. The catalysed reaction is tRNA(Gly) + glycine + ATP = glycyl-tRNA(Gly) + AMP + diphosphate. The polypeptide is Glycine--tRNA ligase alpha subunit (Pseudomonas putida (strain W619)).